The primary structure comprises 105 residues: Cuticle protein AM1159 (105 aa).

The Chitin-binding type R&amp;R domain maps to 16-81; that stretch reads DGNFNYNFQT…PESPLLPVGP (66 aa). The segment at 25–46 is disordered; it reads TSNGIEDTKTGTPGSQGQSNMQ.

In terms of tissue distribution, arthrodial membrane.

The protein is Cuticle protein AM1159 of Cancer pagurus (Rock crab).